Reading from the N-terminus, the 568-residue chain is uncharacterized protein (568 aa).

The segment covering 334 to 346 has biased composition (basic and acidic residues); the sequence is DDNEEKNNDRPKI. Disordered stretches follow at residues 334 to 382 and 436 to 479; these read DDNE…NDQN and QVEE…SCKN. A compositionally biased stretch (low complexity) spans 458–477; the sequence is KIASSASKNDNSNNKNSKSC.

The protein to yeast YJL043w.

This is an uncharacterized protein from Saccharomyces cerevisiae (strain ATCC 204508 / S288c) (Baker's yeast).